The chain runs to 554 residues: Wee1-like protein kinase 2-B (554 aa).

Disordered regions lie at residues 1–86 (MRMA…GGEC) and 145–182 (TLVN…DSQM). At serine 38 the chain carries Phosphoserine. Polar residues-rich tracts occupy residues 38-48 (SPVSSWRTNNC) and 147-163 (VNVN…THFQ). Positions 213-487 (FLEIEKIGAG…AKNSVLRRCV (275 aa)) constitute a Protein kinase domain. Residues 219–227 (IGAGEFGSV) and lysine 242 contribute to the ATP site. Aspartate 340 acts as the Proton acceptor in catalysis. Mg(2+) is bound by residues asparagine 345 and aspartate 377. A coiled-coil region spans residues 490–516 (AAELQKQLNVEKFKTAMLERELQAAKL).

The protein belongs to the protein kinase superfamily. Ser/Thr protein kinase family. WEE1 subfamily. Interacts with cdca3. In terms of processing, ubiquitinated and degraded at the onset of G2/M phase. Phosphorylated during M and G1 phases. Interacts with cdca3 when phosphorylated at Ser-38.

It localises to the nucleus. It carries out the reaction L-tyrosyl-[protein] + ATP = O-phospho-L-tyrosyl-[protein] + ADP + H(+). In terms of biological role, oocyte and early embryo-specific protein tyrosine kinase that phosphorylates and inhibits cdk1 and acts as a regulator of meiosis in oocytes. Required to ensure the meiotic cell cycle in oocytes by phosphorylating cdk1 at 'Tyr-15', leading to inhibit cdk1 activity and prevent meiosis. The sequence is that of Wee1-like protein kinase 2-B (wee2-b) from Xenopus laevis (African clawed frog).